Reading from the N-terminus, the 219-residue chain is Small ribosomal subunit protein uS5 (219 aa).

The tract at residues 1–32 is disordered; sequence MSHPQSRPGGRDGRPRRRREPREEAPWVPKTA. The 64-residue stretch at 68-131 folds into the S5 DRBM domain; that stretch reads LKTEVVDVGI…NQALLNVGPI (64 aa).

It belongs to the universal ribosomal protein uS5 family. In terms of assembly, part of the 30S ribosomal subunit. Contacts protein S4.

With S4 and S12 plays an important role in translational accuracy. This chain is Small ribosomal subunit protein uS5 (rps5), found in Cenarchaeum symbiosum (strain A).